The sequence spans 92 residues: Small ribosomal subunit protein uS19 (92 aa).

The protein belongs to the universal ribosomal protein uS19 family.

Its function is as follows. Protein S19 forms a complex with S13 that binds strongly to the 16S ribosomal RNA. In Leptospira biflexa serovar Patoc (strain Patoc 1 / Ames), this protein is Small ribosomal subunit protein uS19.